Consider the following 305-residue polypeptide: Glycine--tRNA ligase alpha subunit (305 aa).

It belongs to the class-II aminoacyl-tRNA synthetase family. In terms of assembly, tetramer of two alpha and two beta subunits.

It localises to the cytoplasm. The enzyme catalyses tRNA(Gly) + glycine + ATP = glycyl-tRNA(Gly) + AMP + diphosphate. The protein is Glycine--tRNA ligase alpha subunit of Streptococcus pneumoniae (strain 70585).